We begin with the raw amino-acid sequence, 169 residues long: Cell cycle link protein (169 aa).

The binding to host SKP1 protein stretch occupies residues 9–22; that stretch reads LPEELREKIVHDHL. The LXCXE motif, interaction with host RBR signature appears at 110–114; that stretch reads LSCRE.

The protein belongs to the nanovirus Clink protein family. As to quaternary structure, interacts with host SKP1. Interacts (via LXCXE domain) with host retinoblastoma-related protein 1 (RBR1). Interacts (via LXCXE domain) with retinoblastoma-related proteins (RBR).

Functionally, interacts with and disrupts the function of host retinoblastoma-related proteins RBR, which are key regulators of the cell cycle. Induces transcriptional activation of E2F-regulated S-phase and G2/M-phase-specific genes. Inactivation of the ability of RBR to arrest the cell cycle leads to the stimulation of viral DNA replication. In Faba bean necrotic yellows virus (isolate Egyptian EV1-93) (FBNYV), this protein is Cell cycle link protein (DNA-C).